The following is a 539-amino-acid chain: Protein ENTREP2 (539 aa).

4 helical membrane-spanning segments follow: residues 31-51 (IVLA…AVSF), 65-85 (SCPF…VVSW), 89-109 (LSLV…LNLA), and 176-196 (LLFS…LATA). Residues 301 to 481 (VVGQPPASQV…TSKERPRSLV (181 aa)) are disordered. Residues 306-331 (PASQVTSIGQQVAESSSGDPNTSAGF) are compositionally biased toward polar residues. Residues 347-365 (GTATPGSSPSPDGPVGAPA) show a composition bias toward low complexity. The span at 395–408 (SRSTSDPTLCTSSM) shows a compositional bias: polar residues.

It belongs to the ENTREP family.

It is found in the membrane. In Homo sapiens (Human), this protein is Protein ENTREP2.